Reading from the N-terminus, the 85-residue chain is Polcalcin Aln g 4 (85 aa).

EF-hand domains are found at residues 7–42 (QDQAEHERIFKCFDANGDGKISASELGDALKTLGSV) and 45–77 (DEVKHMMAEIDTDGDGFISFQEFTNFARANRGL). Ca(2+) contacts are provided by Asp20, Asn22, Asp24, Lys26, Glu31, Asp55, Asp57, Asp59, and Glu66.

The protein is Polcalcin Aln g 4 of Alnus glutinosa (European alder).